We begin with the raw amino-acid sequence, 439 residues long: GTPase Der (439 aa).

EngA-type G domains lie at Pro-3–Ser-167 and Thr-176–Ser-351. GTP contacts are provided by residues Gly-9–Ser-16, Asp-56–Phe-60, Asn-119–Asp-122, Gly-182–Ser-189, Asp-229–Ile-233, and Asn-294–Asp-297. Positions Lys-352–Asp-436 constitute a KH-like domain.

The protein belongs to the TRAFAC class TrmE-Era-EngA-EngB-Septin-like GTPase superfamily. EngA (Der) GTPase family. As to quaternary structure, associates with the 50S ribosomal subunit.

In terms of biological role, GTPase that plays an essential role in the late steps of ribosome biogenesis. This is GTPase Der from Geobacter metallireducens (strain ATCC 53774 / DSM 7210 / GS-15).